The sequence spans 167 residues: Protein YfbM (167 aa).

As to quaternary structure, monomer.

This Escherichia coli (strain K12) protein is Protein YfbM (yfbM).